A 1351-amino-acid chain; its full sequence is Transcriptional regulator ovo (1351 aa).

The segment at 1 to 31 (MPKIFLIKNRLHQQQQRLLESQNLLQHKNQD) is required for Ubr3 binding and tal-dependent proteolytic processing. Disordered stretches follow at residues 22-77 (QNLL…SDQQ), 100-119 (LDHL…NPNQ), 184-397 (NSPI…SDEE), 447-554 (AGHG…HFNA), 640-665 (SNSK…GQTS), 778-807 (DDEE…PVEQ), 834-887 (GSNQ…YQHA), 916-1000 (LLSQ…PSPT), 1023-1044 (PMSS…GSSN), and 1113-1192 (SKHG…DSSS). Over residues 49–60 (SPTPTSQPPPEP) the composition is skewed to pro residues. Low complexity-rich tracts occupy residues 61–72 (QGQGQQVLGQVP) and 104–119 (NQNQ…NPNQ). Basic and acidic residues predominate over residues 205–232 (EKEKPAEREREKSDERTEQVEKEERVER). Residues 233–242 (EEEEDDEVDV) are compositionally biased toward acidic residues. The segment covering 262–272 (QRKEYPQEPKD) has biased composition (basic and acidic residues). The span at 324–340 (TPPPADQRPSPPPPRDP) shows a compositional bias: pro residues. Positions 447-486 (AGHGRNSSSSSGAAGQGFQSSGFGSQNSGSGSSSGNQNAG) are enriched in low complexity. Positions 487–505 (SGAGSPGSGAGGGGGMGGG) are enriched in gly residues. Over residues 530 to 552 (KSGQQSTASNNTGQSPGANHSHF) the composition is skewed to polar residues. A compositionally biased stretch (basic residues) spans 644–653 (FHNHHHHHQH). Positions 793-807 (STPSLTPDSVTPVEQ) are enriched in polar residues. Composition is skewed to low complexity over residues 835–878 (SNQQ…HVQQ), 916–962 (LLSQ…QQQQ), 970–979 (QQQQQPQPQS), 1025–1044 (SSSS…GSSN), and 1121–1175 (HQQQ…HGSA). 4 consecutive C2H2-type zinc fingers follow at residues 1197–1219 (FVCR…MKCH), 1225–1247 (YLCT…TRTH), 1253–1276 (YKCN…QKVH), and 1292–1315 (YVCE…KNNH).

In terms of assembly, interacts (via N-terminus) with Ubr3; the interaction is mediated by tal. In terms of processing, N-terminus is proteolytically cleaved and ubiquitinated via a tal-dependent mechanism, leading to the proteolytic degradation of the N-terminus and the production of transcriptional activator shavenbaby, a truncated form with transcriptional activator activity.

Its subcellular location is the cytoplasm. The protein localises to the nucleus. It localises to the nucleoplasm. In terms of biological role, transcriptional regulator with essential functions in the germline and soma. Plays an essential role in regulating the formation of apical cell extensions such as denticles and aristae, and initiating cytoskeletal remodeling during epidermal differentiation. Transcriptional repressor which functions in postembryonic development. The full-length unprocessed form acts as a transcriptional repressor (Transcriptional repressor svb). Its function is as follows. Transcriptional activator which initiates trichome development and also promotes tarsal joint development. Has an essential somatic role regulating the tal-dependent formation of trichomes, and initiating cytoskeletal remodeling during epidermal differentiation. Function with SoxN is required for correct denticle morphogenesis on the embryonic epidermis. SoxN and svb appear to act both independently and in conjunction with each other to activate certain genes involved in denticle morphogenesis; Svb appears to be involved in regulating denticle length whereas SoxN regulates the denticle base circumference. Also functions in the development of other apical cell extensions such as bristles. Also has an important role in tarsal joint development, repressing expression of the N ligand Dl and defining its signaling boundary. Functionally, transcriptional repressor which is specifically involved in female germline development, where it functions antagonistically to isoform D. Negatively regulates expression of otu and may also have autoregulatory activity. Negatively regulates expression of piwi in the primordial germ cells (PGCs). In terms of biological role, transcriptional activator which is specifically involved in female germline development, where it functions antagonistically to isoform C. Necessary and sufficient for normal oogenesis. Required in the primordial germ cells (PGCs) for normal development of male and female germline cells. Plays a role in germline sex determination. Binds the promoter DNA and positively regulates the transcription of the otu gene in a stage-specific manner. May have autoregulatory activity. The protein is Transcriptional regulator ovo of Drosophila melanogaster (Fruit fly).